Here is a 209-residue protein sequence, read N- to C-terminus: Large ribosomal subunit protein uL3 (209 aa).

Position 150 is an N5-methylglutamine (glutamine 150).

This sequence belongs to the universal ribosomal protein uL3 family. As to quaternary structure, part of the 50S ribosomal subunit. Forms a cluster with proteins L14 and L19. In terms of processing, methylated by PrmB.

One of the primary rRNA binding proteins, it binds directly near the 3'-end of the 23S rRNA, where it nucleates assembly of the 50S subunit. In Vibrio cholerae serotype O1 (strain ATCC 39541 / Classical Ogawa 395 / O395), this protein is Large ribosomal subunit protein uL3.